Here is a 95-residue protein sequence, read N- to C-terminus: MAHKKGTGSTRNGRDSNSQRLGVKRYGGQVVKAGNILVRQRGSKFHAGNNVGVGKDYTLFALVEGMVTFERKGKSRKKVSVYPLAQEANVAVDQA.

The disordered stretch occupies residues 1-24; sequence MAHKKGTGSTRNGRDSNSQRLGVK. The span at 7 to 20 shows a compositional bias: polar residues; that stretch reads TGSTRNGRDSNSQR.

Belongs to the bacterial ribosomal protein bL27 family.

This chain is Large ribosomal subunit protein bL27, found in Trichodesmium erythraeum (strain IMS101).